The following is a 481-amino-acid chain: 3-isopropylmalate dehydratase large subunit (481 aa).

Positions 355, 415, and 418 each coordinate [4Fe-4S] cluster.

The protein belongs to the aconitase/IPM isomerase family. LeuC type 1 subfamily. Heterodimer of LeuC and LeuD. It depends on [4Fe-4S] cluster as a cofactor.

The enzyme catalyses (2R,3S)-3-isopropylmalate = (2S)-2-isopropylmalate. The protein operates within amino-acid biosynthesis; L-leucine biosynthesis; L-leucine from 3-methyl-2-oxobutanoate: step 2/4. In terms of biological role, catalyzes the isomerization between 2-isopropylmalate and 3-isopropylmalate, via the formation of 2-isopropylmaleate. The polypeptide is 3-isopropylmalate dehydratase large subunit (Symbiobacterium thermophilum (strain DSM 24528 / JCM 14929 / IAM 14863 / T)).